The following is a 540-amino-acid chain: Chaperonin GroEL (540 aa).

ATP-binding positions include 30–33 (TLGP), lysine 51, 87–91 (DGTTT), glycine 415, and aspartate 495.

This sequence belongs to the chaperonin (HSP60) family. In terms of assembly, forms a cylinder of 14 subunits composed of two heptameric rings stacked back-to-back. Interacts with the co-chaperonin GroES.

Its subcellular location is the cytoplasm. The catalysed reaction is ATP + H2O + a folded polypeptide = ADP + phosphate + an unfolded polypeptide.. Functionally, together with its co-chaperonin GroES, plays an essential role in assisting protein folding. The GroEL-GroES system forms a nano-cage that allows encapsulation of the non-native substrate proteins and provides a physical environment optimized to promote and accelerate protein folding. The polypeptide is Chaperonin GroEL (Erwinia aphidicola).